A 729-amino-acid chain; its full sequence is Replication restart protein PriA (729 aa).

Positions 209–376 (QTALGRFRSF…QSGAYRLLQL (168 aa)) constitute a Helicase ATP-binding domain. Position 222–229 (222–229 (GITGSGKT)) interacts with ATP. The short motif at 319–322 (DEEH) is the DEAH box element. 8 residues coordinate Zn(2+): C436, C439, C445, C448, C463, C466, C476, and C479. The 153-residue stretch at 471 to 623 (PIPFKCPDCG…YAVFAENELN (153 aa)) folds into the Helicase C-terminal domain.

Belongs to the helicase family. PriA subfamily. As to quaternary structure, interacts with PriB with high affinity in the absence of DNA. Component of the replication restart primosome. It depends on Zn(2+) as a cofactor.

The enzyme catalyses Couples ATP hydrolysis with the unwinding of duplex DNA by translocating in the 3'-5' direction.. It catalyses the reaction ATP + H2O = ADP + phosphate + H(+). With respect to regulation, helicase and ATPase activities on forked DNA are stimulated by PriB; E.coli PriB does not stimulate this helicase. PriA:PriB complex-catalyzed duplex DNA winding is inhibited by CGS 15943 (CHEBI:131351). CGS 15943 decreases ATP hydrolysis and decreases PriA's affinity for DNA. Initiates the restart of stalled replication forks, which reloads the replicative helicase on sites other than the origin of replication. Recognizes and binds to abandoned replication forks and remodels them to uncover a helicase loading site. Promotes assembly of the primosome at these replication forks. In terms of biological role, DNA helicase with greatest unwinding activity on forked DNA substrates with relatively short duplex lagging strand arms. A DNA-dependent ATPase. Required for DNA transformation and DNA repair. Binds single-stranded (ss)DNA and replication fork-like DNA but not double-stranded (ds)DNA. The sequence is that of Replication restart protein PriA from Neisseria gonorrhoeae (strain ATCC 700825 / FA 1090).